We begin with the raw amino-acid sequence, 1173 residues long: Rac guanine nucleotide exchange factor JJ (1173 aa).

Disordered stretches follow at residues 1 to 380 (MSYE…NQTQ), 458 to 479 (KDQL…LKQM), and 712 to 765 (DDQN…QQQQ). 2 stretches are compositionally biased toward low complexity: residues 8–23 (QQQQ…QQQQ) and 35–45 (QQQQHPQPQYP). The segment covering 50 to 62 (TAQSNDSQQQHYG) has biased composition (polar residues). Low complexity-rich tracts occupy residues 72-82 (TTSTTQQQQQQ) and 98-118 (QYDQ…NYDY). Residues 119–133 (SNTSGNRNSGQYDQY) show a composition bias toward polar residues. 3 stretches are compositionally biased toward low complexity: residues 134–143 (TTTNTTSANT), 153–191 (SPTP…TSTN), and 208–219 (SQTQQQHSPTSS). A compositionally biased stretch (polar residues) spans 220–239 (YDYSQVTNNTATNYDSYYQQ). The segment covering 240-258 (PTTPTSTSSSSSTTTTTTT) has biased composition (low complexity). Positions 262–277 (SKFEKSQSLKNMDHFI) are enriched in basic and acidic residues. Residues 280 to 295 (TPSNTPSATINSWDYN) show a composition bias toward polar residues. Over residues 296–380 (QQQPQPQQPQ…NTDTYSNQTQ (85 aa)) the composition is skewed to low complexity. Basic and acidic residues predominate over residues 470–479 (KKGEEDLKQM). Over residues 743–765 (QQPQPQQEQPPQQQQQQQQQQQQ) the composition is skewed to low complexity. One can recognise an IQ domain in the interval 793-822 (RFGDIIRVQRVSRKWLARKKFKDLVKMKLL). The region spanning 833-1016 (NRFKSVNELY…KDINKYINDR (184 aa)) is the DH domain. The region spanning 1044–1146 (RYFVRESQCN…WLQDLSVELK (103 aa)) is the PH domain.

In terms of biological role, GTPase-activating protein. In Dictyostelium discoideum (Social amoeba), this protein is Rac guanine nucleotide exchange factor JJ (gxcJJ).